A 67-amino-acid chain; its full sequence is VLIIAVLFLTACQLIATASYARSERKHPDLRLSSRNSKLSKRCLGSGELCVRDTSCCSMSCTNNICF.

The N-terminal stretch at 1 to 17 is a signal peptide; it reads VLIIAVLFLTACQLIAT. Positions 18–40 are excised as a propeptide; that stretch reads ASYARSERKHPDLRLSSRNSKLS. 3 cysteine pairs are disulfide-bonded: Cys-43-Cys-57, Cys-50-Cys-61, and Cys-56-Cys-66.

Belongs to the conotoxin O1 superfamily. Expressed by the venom duct.

Its subcellular location is the secreted. The chain is Conotoxin AbVIM from Conus abbreviatus (Abbreviated cone).